Reading from the N-terminus, the 276-residue chain is Large ribosomal subunit protein uL2 (276 aa).

Positions 212–276 are disordered; that stretch reads NRHRGIRPQT…KLIISRKKHK (65 aa). The span at 257 to 276 shows a compositional bias: basic residues; it reads YKTRKKKASDKLIISRKKHK.

Belongs to the universal ribosomal protein uL2 family. In terms of assembly, part of the 50S ribosomal subunit. Forms a bridge to the 30S subunit in the 70S ribosome.

One of the primary rRNA binding proteins. Required for association of the 30S and 50S subunits to form the 70S ribosome, for tRNA binding and peptide bond formation. It has been suggested to have peptidyltransferase activity; this is somewhat controversial. Makes several contacts with the 16S rRNA in the 70S ribosome. In Helicobacter pylori (strain P12), this protein is Large ribosomal subunit protein uL2.